We begin with the raw amino-acid sequence, 457 residues long: ATP synthase subunit beta (457 aa).

Residue 147-154 coordinates ATP; it reads GGAGVGKT.

This sequence belongs to the ATPase alpha/beta chains family. In terms of assembly, F-type ATPases have 2 components, CF(1) - the catalytic core - and CF(0) - the membrane proton channel. CF(1) has five subunits: alpha(3), beta(3), gamma(1), delta(1), epsilon(1). CF(0) has three main subunits: a(1), b(2) and c(9-12). The alpha and beta chains form an alternating ring which encloses part of the gamma chain. CF(1) is attached to CF(0) by a central stalk formed by the gamma and epsilon chains, while a peripheral stalk is formed by the delta and b chains.

The protein localises to the cell inner membrane. The catalysed reaction is ATP + H2O + 4 H(+)(in) = ADP + phosphate + 5 H(+)(out). Its function is as follows. Produces ATP from ADP in the presence of a proton gradient across the membrane. The catalytic sites are hosted primarily by the beta subunits. The sequence is that of ATP synthase subunit beta from Haemophilus influenzae (strain PittGG).